Here is a 400-residue protein sequence, read N- to C-terminus: Argininosuccinate synthase (400 aa).

An ATP-binding site is contributed by 8–16; sequence AYSGGLDTS. Positions 86 and 91 each coordinate L-citrulline. Glycine 116 is an ATP binding site. 3 residues coordinate L-aspartate: threonine 118, asparagine 122, and aspartate 123. Asparagine 122 lines the L-citrulline pocket. Residues arginine 126, serine 175, serine 184, glutamate 260, and tyrosine 272 each coordinate L-citrulline.

Belongs to the argininosuccinate synthase family. Type 1 subfamily. In terms of assembly, homotetramer.

It localises to the cytoplasm. The enzyme catalyses L-citrulline + L-aspartate + ATP = 2-(N(omega)-L-arginino)succinate + AMP + diphosphate + H(+). Its pathway is amino-acid biosynthesis; L-arginine biosynthesis; L-arginine from L-ornithine and carbamoyl phosphate: step 2/3. This chain is Argininosuccinate synthase, found in Clostridium acetobutylicum (strain ATCC 824 / DSM 792 / JCM 1419 / IAM 19013 / LMG 5710 / NBRC 13948 / NRRL B-527 / VKM B-1787 / 2291 / W).